The following is a 275-amino-acid chain: MTLQQQIIKVLGAKPQINAEEEIRRSIDFLKSYLQTYPFIKSLVLGISGGQDSTLAGKLCQMAINELRQETGNESLQFIAVRLPYGVQADEQDCQDAIAFIQPDRVLTVNIKGAVLASEQALREAGIELSDFVRGNEKARERMKAQYSIAGMTSGVVVGTDHAAEAITGFFTKYGDGGTDINPLYRLNKRQGKQLLAALGCPEHLYKKAPTADLEDDRPSLPDEVALGVTYDNIDDYLEGKNVPEQVARTIENWYLKTEHKRRPPITVFDDFWKK.

Residue 46-53 (GISGGQDS) coordinates ATP. Residue aspartate 52 participates in Mg(2+) binding. Residue arginine 140 coordinates deamido-NAD(+). Residue threonine 160 participates in ATP binding. A Mg(2+)-binding site is contributed by glutamate 165. Residues lysine 173 and aspartate 180 each coordinate deamido-NAD(+). Lysine 189 and threonine 211 together coordinate ATP. 260 to 261 (HK) serves as a coordination point for deamido-NAD(+).

Belongs to the NAD synthetase family. As to quaternary structure, homodimer.

It catalyses the reaction deamido-NAD(+) + NH4(+) + ATP = AMP + diphosphate + NAD(+) + H(+). It participates in cofactor biosynthesis; NAD(+) biosynthesis; NAD(+) from deamido-NAD(+) (ammonia route): step 1/1. In terms of biological role, catalyzes the ATP-dependent amidation of deamido-NAD to form NAD. Uses ammonia as a nitrogen source. The chain is NH(3)-dependent NAD(+) synthetase from Escherichia coli O45:K1 (strain S88 / ExPEC).